The primary structure comprises 469 residues: Neuraminidase (469 aa).

At 1–6 the chain is on the intravirion side; that stretch reads MNPNQK. Residues 7 to 27 traverse the membrane as a helical segment; it reads IITIGSICMVVGIISLILQIG. Residues 11–33 are involved in apical transport and lipid raft association; that stretch reads GSICMVVGIISLILQIGNIISIW. Topologically, residues 28–469 are virion surface; sequence NIISIWVSHS…GAELPFSIDK (442 aa). The hypervariable stalk region stretch occupies residues 36 to 90; that stretch reads HSIQTGNQNHPETCNQSIITYENNTWVNQTYVNISNTNVVAGQDATSVILTGNSS. 5 N-linked (GlcNAc...) asparagine; by host glycosylation sites follow: asparagine 50, asparagine 58, asparagine 63, asparagine 68, and asparagine 88. The interval 91-469 is head of neuraminidase; it reads LCPISGWAIY…GAELPFSIDK (379 aa). 8 disulfide bridges follow: cysteine 92/cysteine 417, cysteine 124/cysteine 129, cysteine 184/cysteine 231, cysteine 233/cysteine 238, cysteine 279/cysteine 292, cysteine 281/cysteine 290, cysteine 318/cysteine 335, and cysteine 421/cysteine 446. Arginine 118 is a substrate binding site. N-linked (GlcNAc...) asparagine; by host glycosylation occurs at asparagine 146. The active-site Proton donor/acceptor is aspartate 151. Arginine 152 lines the substrate pocket. An N-linked (GlcNAc...) asparagine; by host glycan is attached at asparagine 235. 277–278 contacts substrate; it reads EE. Substrate is bound at residue arginine 293. Residues aspartate 294, glycine 298, aspartate 324, and asparagine 344 each coordinate Ca(2+). Position 368 (arginine 368) interacts with substrate. Catalysis depends on tyrosine 402, which acts as the Nucleophile.

Belongs to the glycosyl hydrolase 34 family. Homotetramer. It depends on Ca(2+) as a cofactor. Post-translationally, N-glycosylated.

The protein localises to the virion membrane. The protein resides in the host apical cell membrane. It catalyses the reaction Hydrolysis of alpha-(2-&gt;3)-, alpha-(2-&gt;6)-, alpha-(2-&gt;8)- glycosidic linkages of terminal sialic acid residues in oligosaccharides, glycoproteins, glycolipids, colominic acid and synthetic substrates.. With respect to regulation, inhibited by the neuraminidase inhibitors zanamivir (Relenza) and oseltamivir (Tamiflu). These drugs interfere with the release of progeny virus from infected cells and are effective against all influenza strains. Resistance to neuraminidase inhibitors is quite rare. Its function is as follows. Catalyzes the removal of terminal sialic acid residues from viral and cellular glycoconjugates. Cleaves off the terminal sialic acids on the glycosylated HA during virus budding to facilitate virus release. Additionally helps virus spread through the circulation by further removing sialic acids from the cell surface. These cleavages prevent self-aggregation and ensure the efficient spread of the progeny virus from cell to cell. Otherwise, infection would be limited to one round of replication. Described as a receptor-destroying enzyme because it cleaves a terminal sialic acid from the cellular receptors. May facilitate viral invasion of the upper airways by cleaving the sialic acid moieties on the mucin of the airway epithelial cells. Likely to plays a role in the budding process through its association with lipid rafts during intracellular transport. May additionally display a raft-association independent effect on budding. Plays a role in the determination of host range restriction on replication and virulence. Sialidase activity in late endosome/lysosome traffic seems to enhance virus replication. The polypeptide is Neuraminidase (Aves (Human)).